Consider the following 186-residue polypeptide: UPF0301 protein Daro_3893 (186 aa).

This sequence belongs to the UPF0301 (AlgH) family.

The chain is UPF0301 protein Daro_3893 from Dechloromonas aromatica (strain RCB).